Consider the following 355-residue polypeptide: Uroporphyrinogen decarboxylase (355 aa).

Residues 38-42 (RQAGR), Asp87, Tyr162, Ser217, and His331 contribute to the substrate site.

Belongs to the uroporphyrinogen decarboxylase family. Homodimer.

It is found in the cytoplasm. The catalysed reaction is uroporphyrinogen III + 4 H(+) = coproporphyrinogen III + 4 CO2. The protein operates within porphyrin-containing compound metabolism; protoporphyrin-IX biosynthesis; coproporphyrinogen-III from 5-aminolevulinate: step 4/4. Its function is as follows. Catalyzes the decarboxylation of four acetate groups of uroporphyrinogen-III to yield coproporphyrinogen-III. The protein is Uroporphyrinogen decarboxylase of Streptomyces coelicolor (strain ATCC BAA-471 / A3(2) / M145).